Here is a 311-residue protein sequence, read N- to C-terminus: Ribonuclease HIII (311 aa).

Residues 95 to 311 (MSIVGSDEVG…NTEKAFRLLK (217 aa)) enclose the RNase H type-2 domain. Aspartate 101, glutamate 102, and aspartate 206 together coordinate a divalent metal cation.

Belongs to the RNase HII family. RnhC subfamily. Mn(2+) serves as cofactor. The cofactor is Mg(2+).

It is found in the cytoplasm. It catalyses the reaction Endonucleolytic cleavage to 5'-phosphomonoester.. In terms of biological role, endonuclease that specifically degrades the RNA of RNA-DNA hybrids. In Bacillus cereus (strain ZK / E33L), this protein is Ribonuclease HIII.